The sequence spans 189 residues: Protein GrpE (189 aa).

Polar residues predominate over residues 1–10 (MADEQQQTLD). A disordered region spans residues 1–21 (MADEQQQTLDPQAPEQTDAPE).

This sequence belongs to the GrpE family. As to quaternary structure, homodimer.

The protein localises to the cytoplasm. Participates actively in the response to hyperosmotic and heat shock by preventing the aggregation of stress-denatured proteins, in association with DnaK and GrpE. It is the nucleotide exchange factor for DnaK and may function as a thermosensor. Unfolded proteins bind initially to DnaJ; upon interaction with the DnaJ-bound protein, DnaK hydrolyzes its bound ATP, resulting in the formation of a stable complex. GrpE releases ADP from DnaK; ATP binding to DnaK triggers the release of the substrate protein, thus completing the reaction cycle. Several rounds of ATP-dependent interactions between DnaJ, DnaK and GrpE are required for fully efficient folding. In Pseudomonas paraeruginosa (strain DSM 24068 / PA7) (Pseudomonas aeruginosa (strain PA7)), this protein is Protein GrpE.